The sequence spans 192 residues: Group XIIA secretory phospholipase A2 (192 aa).

The N-terminal stretch at M1–G25 is a signal peptide. G91, P93, and F95 together coordinate Ca(2+). H113 is a catalytic residue. D114 lines the Ca(2+) pocket. D128 is an active-site residue.

Belongs to the phospholipase A2 family. It depends on Ca(2+) as a cofactor.

Its subcellular location is the secreted. It is found in the cytoplasm. The enzyme catalyses a 1,2-diacyl-sn-glycero-3-phosphocholine + H2O = a 1-acyl-sn-glycero-3-phosphocholine + a fatty acid + H(+). Its function is as follows. PA2 catalyzes the calcium-dependent hydrolysis of the 2-acyl groups in 3-sn-phosphoglycerides. Does not exhibit detectable activity toward sn-2-arachidonoyl- or linoleoyl-phosphatidylcholine or -phosphatidylethanolamine. The sequence is that of Group XIIA secretory phospholipase A2 (Pla2g12a) from Mus musculus (Mouse).